Consider the following 193-residue polypeptide: ATP-dependent Clp protease proteolytic subunit (193 aa).

Catalysis depends on Ser98, which acts as the Nucleophile. His123 is a catalytic residue.

The protein belongs to the peptidase S14 family. Fourteen ClpP subunits assemble into 2 heptameric rings which stack back to back to give a disk-like structure with a central cavity, resembling the structure of eukaryotic proteasomes.

Its subcellular location is the cytoplasm. The enzyme catalyses Hydrolysis of proteins to small peptides in the presence of ATP and magnesium. alpha-casein is the usual test substrate. In the absence of ATP, only oligopeptides shorter than five residues are hydrolyzed (such as succinyl-Leu-Tyr-|-NHMec, and Leu-Tyr-Leu-|-Tyr-Trp, in which cleavage of the -Tyr-|-Leu- and -Tyr-|-Trp bonds also occurs).. Functionally, cleaves peptides in various proteins in a process that requires ATP hydrolysis. Has a chymotrypsin-like activity. Plays a major role in the degradation of misfolded proteins. The chain is ATP-dependent Clp protease proteolytic subunit from Agathobacter rectalis (strain ATCC 33656 / DSM 3377 / JCM 17463 / KCTC 5835 / VPI 0990) (Eubacterium rectale).